Reading from the N-terminus, the 139-residue chain is NADPH-dependent 7-cyano-7-deazaguanine reductase (139 aa).

Cysteine 34 (thioimide intermediate) is an active-site residue. Aspartate 41 serves as the catalytic Proton donor. Residues 56–58 (VEL) and 75–76 (HE) contribute to the substrate site.

Belongs to the GTP cyclohydrolase I family. QueF type 1 subfamily.

Its subcellular location is the cytoplasm. It carries out the reaction 7-aminomethyl-7-carbaguanine + 2 NADP(+) = 7-cyano-7-deazaguanine + 2 NADPH + 3 H(+). It participates in tRNA modification; tRNA-queuosine biosynthesis. Functionally, catalyzes the NADPH-dependent reduction of 7-cyano-7-deazaguanine (preQ0) to 7-aminomethyl-7-deazaguanine (preQ1). This Thiobacillus denitrificans (strain ATCC 25259 / T1) protein is NADPH-dependent 7-cyano-7-deazaguanine reductase.